A 204-amino-acid polypeptide reads, in one-letter code: UPF0134 protein MPN_655 (204 aa).

Positions 46–132 are disordered; that stretch reads EVENKPKIPI…FNEFKDSNNQ (87 aa). The span at 64–80 shows a compositional bias: pro residues; sequence SPKPLKPPKPPKPPKGP. Basic and acidic residues predominate over residues 117-132; the sequence is YVTRKEFNEFKDSNNQ.

It belongs to the UPF0134 family.

The chain is UPF0134 protein MPN_655 from Mycoplasma pneumoniae (strain ATCC 29342 / M129 / Subtype 1) (Mycoplasmoides pneumoniae).